The sequence spans 250 residues: L-ascorbate peroxidase, cytosolic (250 aa).

His-42 acts as the Proton acceptor in catalysis. Positions 113 to 137 (VPFHPGREDKPEPPPEGRLPDATKG) are disordered. Basic and acidic residues predominate over residues 117-137 (PGREDKPEPPPEGRLPDATKG). His-163 is a binding site for heme b. K(+) contacts are provided by Thr-164, Thr-180, Asn-182, Ile-185, and Asp-187.

This sequence belongs to the peroxidase family. Ascorbate peroxidase subfamily. It depends on heme b as a cofactor.

The protein resides in the cytoplasm. It catalyses the reaction L-ascorbate + H2O2 = L-dehydroascorbate + 2 H2O. Plays a key role in hydrogen peroxide removal. This is L-ascorbate peroxidase, cytosolic (APX1) from Pisum sativum (Garden pea).